Consider the following 206-residue polypeptide: Small ribosomal subunit protein uS4 (206 aa).

One can recognise an S4 RNA-binding domain in the interval 96–157; sequence QRLDNVVYRM…KAKKQARIGA (62 aa).

Belongs to the universal ribosomal protein uS4 family. In terms of assembly, part of the 30S ribosomal subunit. Contacts protein S5. The interaction surface between S4 and S5 is involved in control of translational fidelity.

In terms of biological role, one of the primary rRNA binding proteins, it binds directly to 16S rRNA where it nucleates assembly of the body of the 30S subunit. Functionally, with S5 and S12 plays an important role in translational accuracy. The sequence is that of Small ribosomal subunit protein uS4 from Idiomarina loihiensis (strain ATCC BAA-735 / DSM 15497 / L2-TR).